The chain runs to 322 residues: CXXC-type zinc finger protein 5 (322 aa).

Gly residues predominate over residues 1 to 10 (MSSLGGGSQD). A disordered region spans residues 1-100 (MSSLGGGSQD…SGGGSMMGGE (100 aa)). 2 stretches are compositionally biased toward low complexity: residues 11 to 20 (AGGSSSSSTN) and 28 to 52 (SGPK…VADD). Residue threonine 53 is modified to Phosphothreonine. The span at 87–97 (SSGGSGGGSMM) shows a compositional bias: gly residues. Residues 256–297 (GKKKRKRCGMCAPCRRRINCEQCSSCRNRKTGHQICKFRKCE) form a CXXC-type zinc finger. Positions 257 to 262 (KKKRKR) match the Nuclear localization signal motif. Zn(2+) contacts are provided by cysteine 263, cysteine 266, cysteine 269, cysteine 275, cysteine 278, cysteine 281, cysteine 291, and cysteine 296.

In terms of assembly, interacts with DVL1. Interacts with RBPJ.

It is found in the nucleus. Its subcellular location is the cytoplasm. May indirectly participate in activation of the NF-kappa-B and MAPK pathways. Acts as a mediator of BMP4-mediated modulation of canonical Wnt signaling activity in neural stem cells. Required for DNA damage-induced ATM phosphorylation, p53 activation and cell cycle arrest. Involved in myelopoiesis. Transcription factor. Binds to the oxygen responsive element of COX4I2 and represses its transcription under hypoxia conditions (4% oxygen), as well as normoxia conditions (20% oxygen). May repress COX4I2 transactivation induced by CHCHD2 and RBPJ. Binds preferentially to DNA containing cytidine-phosphate-guanosine (CpG) dinucleotides over CpH (H=A, T, and C), hemimethylated-CpG and hemimethylated-hydroxymethyl-CpG. In Homo sapiens (Human), this protein is CXXC-type zinc finger protein 5 (CXXC5).